A 116-amino-acid polypeptide reads, in one-letter code: UPF0102 protein LBJ_1427 (116 aa).

Belongs to the UPF0102 family.

This chain is UPF0102 protein LBJ_1427, found in Leptospira borgpetersenii serovar Hardjo-bovis (strain JB197).